Reading from the N-terminus, the 135-residue chain is UPF0102 protein PGN_1801 (135 aa).

Belongs to the UPF0102 family.

The chain is UPF0102 protein PGN_1801 from Porphyromonas gingivalis (strain ATCC 33277 / DSM 20709 / CIP 103683 / JCM 12257 / NCTC 11834 / 2561).